Consider the following 197-residue polypeptide: Small ribosomal subunit protein uS5 (197 aa).

Basic and acidic residues predominate over residues 1 to 17 (MAERENRGRGRGRNREE). Disordered stretches follow at residues 1–22 (MAER…TPEF) and 158–197 (NESS…SEEA). The S5 DRBM domain occupies 22 to 85 (FADRLVAINR…EQAKRQLIRV (64 aa)). A compositionally biased stretch (basic and acidic residues) spans 172-186 (KVADILPKRDDHPQI).

It belongs to the universal ribosomal protein uS5 family. Part of the 30S ribosomal subunit. Contacts proteins S4 and S8.

Its function is as follows. With S4 and S12 plays an important role in translational accuracy. Located at the back of the 30S subunit body where it stabilizes the conformation of the head with respect to the body. The chain is Small ribosomal subunit protein uS5 from Jannaschia sp. (strain CCS1).